The primary structure comprises 130 residues: MKRRTARERAMQALYQMDITGELEPKVAVENTLDEGEETNEFLESLVVGFVENKEAIDEAIRQNLKKWKLERISIVDRSILRVAVYEMKYMEEIPHNVTINEAIEIAKTFGDEESRRFINGVLSNIKDTL.

This sequence belongs to the NusB family.

In terms of biological role, involved in transcription antitermination. Required for transcription of ribosomal RNA (rRNA) genes. Binds specifically to the boxA antiterminator sequence of the ribosomal RNA (rrn) operons. This chain is Transcription antitermination protein NusB, found in Bacillus cereus (strain B4264).